The chain runs to 406 residues: Formate-dependent phosphoribosylglycinamide formyltransferase (406 aa).

N(1)-(5-phospho-beta-D-ribosyl)glycinamide contacts are provided by residues 28-29 (EL) and Glu88. Residues Arg121, Lys162, 167 to 172 (SSGKGQ), 202 to 205 (EGFI), and Glu210 contribute to the ATP site. The 195-residue stretch at 126 to 320 (RLAAEELGCA…EFELHAKAIL (195 aa)) folds into the ATP-grasp domain. Positions 279 and 291 each coordinate Mg(2+). Residues Asp298, Lys367, and 374-375 (RR) each bind N(1)-(5-phospho-beta-D-ribosyl)glycinamide.

This sequence belongs to the PurK/PurT family. As to quaternary structure, homodimer.

The enzyme catalyses N(1)-(5-phospho-beta-D-ribosyl)glycinamide + formate + ATP = N(2)-formyl-N(1)-(5-phospho-beta-D-ribosyl)glycinamide + ADP + phosphate + H(+). It participates in purine metabolism; IMP biosynthesis via de novo pathway; N(2)-formyl-N(1)-(5-phospho-D-ribosyl)glycinamide from N(1)-(5-phospho-D-ribosyl)glycinamide (formate route): step 1/1. Its function is as follows. Involved in the de novo purine biosynthesis. Catalyzes the transfer of formate to 5-phospho-ribosyl-glycinamide (GAR), producing 5-phospho-ribosyl-N-formylglycinamide (FGAR). Formate is provided by PurU via hydrolysis of 10-formyl-tetrahydrofolate. The protein is Formate-dependent phosphoribosylglycinamide formyltransferase of Janthinobacterium sp. (strain Marseille) (Minibacterium massiliensis).